The chain runs to 414 residues: Serine--tRNA ligase (414 aa).

230 to 232 (TSE) contributes to the L-serine binding site. Position 261–263 (261–263 (RQE)) interacts with ATP. Position 284 (Glu-284) interacts with L-serine. 348 to 351 (EISS) provides a ligand contact to ATP. Ser-382 contacts L-serine.

Belongs to the class-II aminoacyl-tRNA synthetase family. Type-1 seryl-tRNA synthetase subfamily. Homodimer. The tRNA molecule binds across the dimer.

The protein localises to the cytoplasm. The catalysed reaction is tRNA(Ser) + L-serine + ATP = L-seryl-tRNA(Ser) + AMP + diphosphate + H(+). The enzyme catalyses tRNA(Sec) + L-serine + ATP = L-seryl-tRNA(Sec) + AMP + diphosphate + H(+). The protein operates within aminoacyl-tRNA biosynthesis; selenocysteinyl-tRNA(Sec) biosynthesis; L-seryl-tRNA(Sec) from L-serine and tRNA(Sec): step 1/1. Catalyzes the attachment of serine to tRNA(Ser). Is also able to aminoacylate tRNA(Sec) with serine, to form the misacylated tRNA L-seryl-tRNA(Sec), which will be further converted into selenocysteinyl-tRNA(Sec). This Campylobacter concisus (strain 13826) protein is Serine--tRNA ligase.